The chain runs to 558 residues: Formate--tetrahydrofolate ligase 2 (558 aa).

67–74 (TPAGEGKT) contacts ATP.

Belongs to the formate--tetrahydrofolate ligase family.

The catalysed reaction is (6S)-5,6,7,8-tetrahydrofolate + formate + ATP = (6R)-10-formyltetrahydrofolate + ADP + phosphate. It functions in the pathway one-carbon metabolism; tetrahydrofolate interconversion. The chain is Formate--tetrahydrofolate ligase 2 from Desulfitobacterium hafniense (strain Y51).